A 956-amino-acid polypeptide reads, in one-letter code: Kinesin heavy chain isoform 5C (956 aa).

The Kinesin motor domain maps to 8–327 (SIKVMCRFRP…LMFGQRAKTI (320 aa)). ATP is bound by residues Gln-87, Ser-89, Ser-90, Gly-91, Lys-92, Thr-93, His-94, and Lys-99. The segment at 174 to 315 (VSSPEEVMDV…PSVFNEAETK (142 aa)) is microtubule-binding. Thr-403 is subject to Phosphothreonine. Residues 406-923 (VDGISAEKEK…RRAHSAQIAK (518 aa)) adopt a coiled-coil conformation. A globular region spans residues 859–956 (CELPKLEKRL…GSSNSTHYQK (98 aa)). A disordered region spans residues 910–956 (KNMARRAHSAQIAKPIRPGHYPASSPTAVHAVRGGGGGSSNSTHYQK).

Belongs to the TRAFAC class myosin-kinesin ATPase superfamily. Kinesin family. Kinesin subfamily. Oligomer composed of two heavy chains and two light chains. Interacts with GRIP1. Interacts with KLC3 and TRAK1. Interacts with ZFYVE27.

Its subcellular location is the cytoplasm. It localises to the cytoskeleton. It is found in the cell projection. The protein resides in the dendrite. It catalyses the reaction ATP + H2O = ADP + phosphate + H(+). Functionally, microtubule-associated force-producing protein that may play a role in organelle transport. Has ATPase activity. Involved in synaptic transmission. Mediates dendritic trafficking of mRNAs. Required for anterograde axonal transportation of MAPK8IP3/JIP3 which is essential for MAPK8IP3/JIP3 function in axon elongation. This chain is Kinesin heavy chain isoform 5C (Kif5c), found in Mus musculus (Mouse).